The primary structure comprises 301 residues: Sulfate adenylyltransferase subunit 2 (301 aa).

It belongs to the PAPS reductase family. CysD subfamily. In terms of assembly, heterodimer composed of CysD, the smaller subunit, and CysN.

The enzyme catalyses sulfate + ATP + H(+) = adenosine 5'-phosphosulfate + diphosphate. Its pathway is sulfur metabolism; hydrogen sulfide biosynthesis; sulfite from sulfate: step 1/3. Functionally, with CysN forms the ATP sulfurylase (ATPS) that catalyzes the adenylation of sulfate producing adenosine 5'-phosphosulfate (APS) and diphosphate, the first enzymatic step in sulfur assimilation pathway. APS synthesis involves the formation of a high-energy phosphoric-sulfuric acid anhydride bond driven by GTP hydrolysis by CysN coupled to ATP hydrolysis by CysD. The polypeptide is Sulfate adenylyltransferase subunit 2 (Citrifermentans bemidjiense (strain ATCC BAA-1014 / DSM 16622 / JCM 12645 / Bem) (Geobacter bemidjiensis)).